A 397-amino-acid chain; its full sequence is MKILVVNCGSSSLKYQLIDMTSEEALAKGLVERIGIEGSILTQKVNGEKYIIEEPMKDHKKAIELVLKALVDKEHGVISDMSEIAAVGHRVVHGGEKYASSVLINDEVMKALEDCVKLAPLHNPPNIIGINACRELMPKTPMVAVFDTAFHQTLPDYAYMYPLPYELYEQNGIRKYGFHGTSHRYVSSVASEMMGKDLKDLKVITCHLGNGASLCAVKEGKSVETSMGFTPLAGLAMGTRCGDIDPAILLFMERELKMSPDEVDTVINKKSGVLGISGVSSDFRDIEGAAEEGNKRAKLALDVYHYTVRQTIGAYTAVLNGVDAIVFTAGLGENSAASREEILNGLEYLGIKIDAEKNKQRGKQIEISTEDSKVKVFVIPTDEELMIARDTKEITVK.

Residue Asn7 coordinates Mg(2+). ATP is bound at residue Lys14. Residue Arg90 coordinates substrate. Asp147 serves as the catalytic Proton donor/acceptor. ATP-binding positions include 207–211 (HLGNG), 282–284 (DFR), and 330–334 (GLGEN). Glu383 contacts Mg(2+).

This sequence belongs to the acetokinase family. Homodimer. Mg(2+) serves as cofactor. It depends on Mn(2+) as a cofactor.

The protein localises to the cytoplasm. The enzyme catalyses acetate + ATP = acetyl phosphate + ADP. It participates in metabolic intermediate biosynthesis; acetyl-CoA biosynthesis; acetyl-CoA from acetate: step 1/2. In terms of biological role, catalyzes the formation of acetyl phosphate from acetate and ATP. Can also catalyze the reverse reaction. The polypeptide is Acetate kinase (Clostridium botulinum (strain ATCC 19397 / Type A)).